The sequence spans 184 residues: Probable sensory rhodopsin transducer (184 aa).

The next 2 membrane-spanning stretches (helical) occupy residues 14-34 (TLGV…VNVY) and 52-72 (GLVS…TIIG). One can recognise an HAMP domain in the interval 73–125 (RERTAAVETLAAQARQIEQGELDVDLATNRTDDVGDIYRALAVLRDSEQLDRQ).

It belongs to the methyl-accepting chemotaxis (MCP) protein family. Interacts with Xop2/SRM.

It is found in the membrane. Its function is as follows. The HtrM-Xop2/SRM complex may interact with CheB or CheR and modulate their availability to Sop1 or Sop2. In Haloarcula marismortui (strain ATCC 43049 / DSM 3752 / JCM 8966 / VKM B-1809) (Halobacterium marismortui), this protein is Probable sensory rhodopsin transducer (htrM).